We begin with the raw amino-acid sequence, 230 residues long: ATP synthase subunit a 1 (230 aa).

A run of 5 helical transmembrane segments spans residues 20 to 40, 78 to 98, 112 to 132, 174 to 194, and 195 to 215; these read ATIVFSWLVMLILVLGSWLIT, FLPFIGTLFLFITMANLLTIF, AALALCVFVAVPIYGIKNVGI, LLVAILISIVPLFFPAVMTLF, and GLLVGVIQAYVFTILAMVYIA.

The protein belongs to the ATPase A chain family. In terms of assembly, F-type ATPases have 2 components, CF(1) - the catalytic core - and CF(0) - the membrane proton channel. CF(1) has five subunits: alpha(3), beta(3), gamma(1), delta(1), epsilon(1). CF(0) has four main subunits: a, b, b' and c.

It localises to the cellular thylakoid membrane. Functionally, key component of the proton channel; it plays a direct role in the translocation of protons across the membrane. The polypeptide is ATP synthase subunit a 1 (Crocosphaera subtropica (strain ATCC 51142 / BH68) (Cyanothece sp. (strain ATCC 51142))).